We begin with the raw amino-acid sequence, 316 residues long: Annexin D5 (316 aa).

Position 2 is an N-acetylalanine (A2). Annexin repeat units lie at residues 11–82 (PSPR…LWMP), 83–154 (EAVE…AYLN), 166–238 (ASVE…TILQ), and 242–313 (NSCF…SLLG). Ca(2+) contacts are provided by F24, G26, G28, and E68. S95 carries the phosphoserine modification. At T112 the chain carries Phosphothreonine. G259 lines the Ca(2+) pocket. Y284 is subject to Phosphotyrosine. Residues D299 and T300 each coordinate Ca(2+).

Belongs to the annexin (TC 1.A.31.1) family. Expressed mainly in roots and flowers. Lower in stems and leaves.

In Arabidopsis thaliana (Mouse-ear cress), this protein is Annexin D5 (ANN5).